A 327-amino-acid chain; its full sequence is Cyclic AMP-responsive element-binding protein 1 (327 aa).

Disordered stretches follow at residues Met-1 to Ala-29 and Ser-94 to Ile-113. Positions Asp-8–Thr-146 constitute a KID domain. Polar residues predominate over residues Ala-20 to Ala-29. At Ser-119 the chain carries Phosphoserine; by CaMK1, CaMK2, CaMK4, PKB/AKT1 or PKB/AKT2, RPS6KA3, RPS6KA4, RPS6KA5 and SGK1. Lys-122 is covalently cross-linked (Glycyl lysine isopeptide (Lys-Gly) (interchain with G-Cter in SUMO2)). The segment at Asp-126 to Pro-149 is disordered. Ser-128 is modified (phosphoserine; by CaMK2). Ser-257 bears the Phosphoserine; by HIPK2 mark. The region spanning Ala-269 to Asp-327 is the bZIP domain. The interval Arg-270–Lys-295 is basic motif. Glycyl lysine isopeptide (Lys-Gly) (interchain with G-Cter in SUMO1) cross-links involve residues Lys-271 and Lys-290. Residues Leu-297–Leu-318 are leucine-zipper.

This sequence belongs to the bZIP family. In terms of assembly, interacts with PPRC1. Binds DNA as a dimer. This dimer is stabilized by magnesium ions. Interacts, through the bZIP domain, with the coactivators CRTC1/TORC1, CRTC2/TORC2 and CRTC3/TORC3. When phosphorylated on Ser-119, binds CREBBP. Interacts with CREBL2; regulates CREB1 phosphorylation, stability and transcriptional activity. Interacts (phosphorylated form) with TOX3. Interacts with ARRB1. Binds to HIPK2. Interacts with SGK1. Interacts with TSSK4; this interaction facilitates phosphorylation on Ser-119. Forms a complex with KMT2A and CREBBP. Interacts with TOX4; CREB1 is required for full induction of TOX4-dependent activity and the interaction is increased by cAMP and inhibited by insulin. Post-translationally, phosphorylation of Ser-119 allows CREBBP binding. Stimulated by phosphorylation. Phosphorylation of both Ser-128 and Ser-119 in the SCN regulates the activity of CREB and participate in circadian rhythm generation. Phosphorylated upon calcium influx by CaMK4 and CaMK2 on Ser-119. CaMK4 is much more potent than CaMK2 in activating CREB. Phosphorylated by CaMK2 on Ser-128. Phosphorylation of Ser-128 blocks CREB-mediated transcription even when Ser-119 is phosphorylated. Phosphorylated by CaMK1. Phosphorylation of Ser-257 by HIPK2 in response to genotoxic stress promotes CREB1 activity, facilitating the recruitment of the coactivator CBP. Phosphorylated at Ser-119 by RPS6KA3, RPS6KA4 and RPS6KA5 in response to mitogenic or stress stimuli. CREBL2 positively regulates phosphorylation at Ser-119 thereby stimulating CREB1 transcriptional activity. In liver, phosphorylation is induced by fasting or glucagon in a circadian fashion. Phosphorylated by TSSK4 on Ser-119. Sumoylated with SUMO1. Sumoylation on Lys-290, but not on Lys-271, is required for nuclear localization of this protein. Sumoylation is enhanced under hypoxia, promoting nuclear localization and stabilization.

It localises to the nucleus. Functionally, phosphorylation-dependent transcription factor that stimulates transcription upon binding to the DNA cAMP response element (CRE), a sequence present in many viral and cellular promoters. Transcription activation is enhanced by the TORC coactivators which act independently of Ser-119 phosphorylation. Involved in different cellular processes including the synchronization of circadian rhythmicity and the differentiation of adipose cells. Regulates the expression of apoptotic and inflammatory response factors in cardiomyocytes in response to ERFE-mediated activation of AKT signaling. The sequence is that of Cyclic AMP-responsive element-binding protein 1 (Creb1) from Rattus norvegicus (Rat).